Here is a 374-residue protein sequence, read N- to C-terminus: Probable dual-specificity RNA methyltransferase RlmN (374 aa).

The active-site Proton acceptor is the Glu108. Positions 114–361 (YSDRNTVCIS…SCTVRDTRGR (248 aa)) constitute a Radical SAM core domain. A disulfide bond links Cys121 and Cys367. Cys128, Cys132, and Cys135 together coordinate [4Fe-4S] cluster. S-adenosyl-L-methionine-binding positions include 188 to 189 (GE), Ser222, 245 to 247 (SLH), and Asn324. The S-methylcysteine intermediate role is filled by Cys367.

The protein belongs to the radical SAM superfamily. RlmN family. [4Fe-4S] cluster serves as cofactor.

The protein resides in the cytoplasm. The enzyme catalyses adenosine(2503) in 23S rRNA + 2 reduced [2Fe-2S]-[ferredoxin] + 2 S-adenosyl-L-methionine = 2-methyladenosine(2503) in 23S rRNA + 5'-deoxyadenosine + L-methionine + 2 oxidized [2Fe-2S]-[ferredoxin] + S-adenosyl-L-homocysteine. It carries out the reaction adenosine(37) in tRNA + 2 reduced [2Fe-2S]-[ferredoxin] + 2 S-adenosyl-L-methionine = 2-methyladenosine(37) in tRNA + 5'-deoxyadenosine + L-methionine + 2 oxidized [2Fe-2S]-[ferredoxin] + S-adenosyl-L-homocysteine. In terms of biological role, specifically methylates position 2 of adenine 2503 in 23S rRNA and position 2 of adenine 37 in tRNAs. The chain is Probable dual-specificity RNA methyltransferase RlmN from Mycobacterium sp. (strain JLS).